Here is a 436-residue protein sequence, read N- to C-terminus: Peptidase B (436 aa).

Residues Lys-201 and Asp-206 each contribute to the Mn(2+) site. The active site involves Lys-213. Residues Asp-224, Asp-283, and Glu-285 each coordinate Mn(2+). The active site involves Arg-287.

This sequence belongs to the peptidase M17 family. Homohexamer. It depends on Mn(2+) as a cofactor.

It is found in the cytoplasm. It catalyses the reaction Release of an N-terminal amino acid, Xaa, from a peptide or arylamide. Xaa is preferably Glu or Asp but may be other amino acids, including Leu, Met, His, Cys and Gln.. Probably plays an important role in intracellular peptide degradation. The polypeptide is Peptidase B (Pectobacterium atrosepticum (strain SCRI 1043 / ATCC BAA-672) (Erwinia carotovora subsp. atroseptica)).